Consider the following 393-residue polypeptide: NADH-quinone oxidoreductase subunit H 2 (393 aa).

Transmembrane regions (helical) follow at residues 13-33 (VLVTLVIIAAFPLVAGYIVLV), 79-99 (AIFWFAPCISTITGLVAFAVI), 112-132 (VGLLVISATSAVGILGIILGG), 158-178 (LAFALLSGVMVAGTLSMQGIV), 186-206 (VWGIFANYGFMVVPFVLYIIA), 240-260 (LYFLAEYANIFVISSVAVTLF), 278-298 (LNYGVPVILFVGSGLLTFTLI), 309-329 (VLLGVVVLLVLIGAIMAIPMV), 333-353 (MIGLFWFLVKVSVIIYTMIWF), and 368-388 (IGWKIAIPVGMASVMVNAVLG).

Belongs to the complex I subunit 1 family. As to quaternary structure, NDH-1 is composed of 14 different subunits. Subunits NuoA, H, J, K, L, M, N constitute the membrane sector of the complex.

Its subcellular location is the cell inner membrane. The catalysed reaction is a quinone + NADH + 5 H(+)(in) = a quinol + NAD(+) + 4 H(+)(out). Functionally, NDH-1 shuttles electrons from NADH, via FMN and iron-sulfur (Fe-S) centers, to quinones in the respiratory chain. The immediate electron acceptor for the enzyme in this species is believed to be ubiquinone. Couples the redox reaction to proton translocation (for every two electrons transferred, four hydrogen ions are translocated across the cytoplasmic membrane), and thus conserves the redox energy in a proton gradient. This subunit may bind ubiquinone. This Solibacter usitatus (strain Ellin6076) protein is NADH-quinone oxidoreductase subunit H 2.